Consider the following 38-residue polypeptide: Photosystem II reaction center protein L (38 aa).

Residues 17-37 (SLYWGLLLIFVLAVPFSNYFF) traverse the membrane as a helical segment.

It belongs to the PsbL family. As to quaternary structure, PSII is composed of 1 copy each of membrane proteins PsbA, PsbB, PsbC, PsbD, PsbE, PsbF, PsbH, PsbI, PsbJ, PsbK, PsbL, PsbM, PsbT, PsbX, PsbY, PsbZ, Psb30/Ycf12, at least 3 peripheral proteins of the oxygen-evolving complex and a large number of cofactors. It forms dimeric complexes.

It localises to the plastid. The protein resides in the chloroplast thylakoid membrane. One of the components of the core complex of photosystem II (PSII). PSII is a light-driven water:plastoquinone oxidoreductase that uses light energy to abstract electrons from H(2)O, generating O(2) and a proton gradient subsequently used for ATP formation. It consists of a core antenna complex that captures photons, and an electron transfer chain that converts photonic excitation into a charge separation. This subunit is found at the monomer-monomer interface and is required for correct PSII assembly and/or dimerization. The protein is Photosystem II reaction center protein L of Cedrus deodara (Deodar cedar).